A 482-amino-acid chain; its full sequence is Pentatricopeptide repeat-containing protein At1g74900, mitochondrial (482 aa).

PPR repeat units lie at residues 90-124 (DASS…RIGP), 125-159 (SPKT…GCFQ), 160-190 (DLAS…LRGR), 194-228 (DTVT…GINP), 229-263 (NLTT…DCEI), 264-298 (DVVT…GVLP), 299-333 (SVAT…GYEP), 334-368 (NVTT…GCEP), 369-403 (NFQT…DCLP), 404-441 (NLDT…GFIP), and 442-476 (RKFT…GSRL).

Belongs to the PPR family. P subfamily.

The protein localises to the mitochondrion. Its function is as follows. Required for the trans-splicing of intron 1 of the mitochondrial nad1 transcript encoding the ND1 subunit of the mitochondrial membrane respiratory chain NADH dehydrogenase (Complex I). This chain is Pentatricopeptide repeat-containing protein At1g74900, mitochondrial (OTP43), found in Arabidopsis thaliana (Mouse-ear cress).